Here is a 425-residue protein sequence, read N- to C-terminus: Serine--tRNA ligase (425 aa).

233 to 235 (TAE) is an L-serine binding site. 264–266 (RRE) lines the ATP pocket. E287 lines the L-serine pocket. Position 351–354 (351–354 (EISS)) interacts with ATP. Residue S385 participates in L-serine binding.

The protein belongs to the class-II aminoacyl-tRNA synthetase family. Type-1 seryl-tRNA synthetase subfamily. In terms of assembly, homodimer. The tRNA molecule binds across the dimer.

It is found in the cytoplasm. It catalyses the reaction tRNA(Ser) + L-serine + ATP = L-seryl-tRNA(Ser) + AMP + diphosphate + H(+). The enzyme catalyses tRNA(Sec) + L-serine + ATP = L-seryl-tRNA(Sec) + AMP + diphosphate + H(+). The protein operates within aminoacyl-tRNA biosynthesis; selenocysteinyl-tRNA(Sec) biosynthesis; L-seryl-tRNA(Sec) from L-serine and tRNA(Sec): step 1/1. Its function is as follows. Catalyzes the attachment of serine to tRNA(Ser). Is also able to aminoacylate tRNA(Sec) with serine, to form the misacylated tRNA L-seryl-tRNA(Sec), which will be further converted into selenocysteinyl-tRNA(Sec). The chain is Serine--tRNA ligase from Parasynechococcus marenigrum (strain WH8102).